A 348-amino-acid polypeptide reads, in one-letter code: sn-glycerol-3-phosphate import ATP-binding protein UgpC 3 (348 aa).

The ABC transporter domain maps to 4 to 234; that stretch reads INIVDVKKNY…PASLFVAGFI (231 aa). ATP is bound at residue 36–43; the sequence is GPSGCGKS.

It belongs to the ABC transporter superfamily. sn-glycerol-3-phosphate importer (TC 3.A.1.1.3) family. In terms of assembly, the complex is composed of two ATP-binding proteins (UgpC), two transmembrane proteins (UgpA and UgpE) and a solute-binding protein (UgpB).

The protein localises to the cell inner membrane. It carries out the reaction sn-glycerol 3-phosphate(out) + ATP + H2O = sn-glycerol 3-phosphate(in) + ADP + phosphate + H(+). Functionally, part of the ABC transporter complex UgpBAEC involved in sn-glycerol-3-phosphate (G3P) import. Responsible for energy coupling to the transport system. This chain is sn-glycerol-3-phosphate import ATP-binding protein UgpC 3, found in Rhizobium etli (strain ATCC 51251 / DSM 11541 / JCM 21823 / NBRC 15573 / CFN 42).